The sequence spans 1070 residues: MLGDENGEMSTIPGLNQIQFEGFCGFMDRGLTEELYKFPKIEDTEQEIEFQLFVETYQLVEPLIKERDAVYESLTYSSELYVSAGLIWKTSKDMQEQTIFIGNIPLMNSLGTSIVNGIYRIVINQILQSPGIYYRSELDHNGISVYTGTIISDWGGRLELEIDRKARIWARVSRKQKISILVLSSAMGSNLREILENVCYPEIFLSFLTDKEKKKIGSKENAILEFYQQFSCVGGDPVFSESLCKELQKKFFQQRCELGRIGRRNMNQRLNLNIPQNNTFLLPRDILAAADRLIGMKFGMGPLDDMNHLKNKRIRSVADLLQDQFGLALVRLENVVRGTICGAIRHKLIPTPQNLVTSTPLTTTYESFFGLHPLSQVLDRTNPLTQIVHGRKLSYLGPGGLTGRTANFRIRDIHPSHYGRICPIDTSEGINVGLIGSLAIHARIGHWGSLESPFYKIFERSKKAQMLYLSPSRDEYYMVAAGNSLALNQGIQEEQVVPARYRQEFLTIAWEQVHLRSIFPFQYFSIGASLIPFIEHNDANRALMSSNMQRQAVPLSRSEKCIVGTGLERQVALDSGVPAIADHEGKIISTDTDKIILSGNGDALGIPLVMYQRSNKNTCMHQTARVRRGKCIKKGQILADGAATVGGELALGKNVLVAYMPWEGYNFEDAVLISERLVYEDIYTSFHIRKYEIQTHVTSQGPERITNEIPHLEAHLLRNLDKNGIVMLGSWVETGDILVGKLTPQVAKESSYAPEDRLLRAILGIQVSTSKETCLKLPIGGRGRVIDVRWVQKKGGSSYNPETIRVYISQKREIKVGDKVAGRHGNKGIISKILPRQDMPYLQDGRPVDMVFNPLGVPSRMNVGQLFECSLGLAGSLLDRHHRIAPFDERYEQEASRKLVFSELYQASKQTANPWVFEPEYPGKSRIFDGRTGGPFEQPVIIGKPYILKLIHQVDDKIHGRSSGYYALVTQQPLRGRSKQGGQRVGEMEVWALEGFGVAHILQEMLTYKSDHIRARQEVLGTTIIGGTIPKPEDAPESFRLLVRELRSLALELNHFLVSEKNFQINRKEA.

It belongs to the RNA polymerase beta chain family. In plastids the minimal PEP RNA polymerase catalytic core is composed of four subunits: alpha, beta, beta', and beta''. When a (nuclear-encoded) sigma factor is associated with the core the holoenzyme is formed, which can initiate transcription.

The protein localises to the plastid. It localises to the chloroplast. It carries out the reaction RNA(n) + a ribonucleoside 5'-triphosphate = RNA(n+1) + diphosphate. DNA-dependent RNA polymerase catalyzes the transcription of DNA into RNA using the four ribonucleoside triphosphates as substrates. This chain is DNA-directed RNA polymerase subunit beta, found in Gossypium barbadense (Sea Island cotton).